We begin with the raw amino-acid sequence, 435 residues long: MVKSLAISLIALIIMKNLNVSIIGLSVLTILSMGAASVATGGVELNGLYSTDFVMGLMITLTLFVAILSYLSSAKVSRKASFNLMVISISLILVMSFSVSSFFLFFFFFESVLAPLLLLIVGWGYQPERLQAGGYMVIYTVFGSLFFLWGVSELYLSGMSSSMSSVGSLVKKSAMSLWWLYILGFLIKLPMYPFHLWLPKAHVEAPVAGSMLLAGVVLKLGGYGLLRFMLVMQVSLSSVFFVLLLSVNLAGGFYAGLACVRQVDLKCLVAYSSVAHMSLVLLGVLSNTLLGVMGAIIIMVGHGLCSSGLFSYVNAIYKMSHSRLLVMNKGGXLFCPVLVLMCFLLSSSNMAAPPSLNLFGEILVFGVGGXXSXAFLFILGLMSFISACFSLYLYGSCSHGKGLMHSESLNLSSLCDVFVLLSHWVPLNFLFMFMP.

13 helical membrane-spanning segments follow: residues 27-47, 53-73, 80-100, 102-122, 132-152, 177-197, 206-226, 239-259, 267-285, 295-317, 324-344, 372-394, and 414-434; these read VLTILSMGAASVATGGVELNG, FVMGLMITLTLFVAILSYLSS, ASFNLMVISISLILVMSFSVS, FFLFFFFFESVLAPLLLLIVG, AGGYMVIYTVFGSLFFLWGVS, LWWLYILGFLIKLPMYPFHLW, PVAGSMLLAGVVLKLGGYGLL, VFFVLLLSVNLAGGFYAGLAC, CLVAYSSVAHMSLVLLGVL, AIIIMVGHGLCSSGLFSYVNAIY, LLVMNKGGXLFCPVLVLMCFL, SXAFLFILGLMSFISACFSLYLY, and LCDVFVLLSHWVPLNFLFMFM.

It belongs to the complex I subunit 4 family.

It is found in the mitochondrion membrane. The catalysed reaction is a ubiquinone + NADH + 5 H(+)(in) = a ubiquinol + NAD(+) + 4 H(+)(out). In terms of biological role, core subunit of the mitochondrial membrane respiratory chain NADH dehydrogenase (Complex I) that is believed to belong to the minimal assembly required for catalysis. Complex I functions in the transfer of electrons from NADH to the respiratory chain. The immediate electron acceptor for the enzyme is believed to be ubiquinone. In Mytilus edulis (Blue mussel), this protein is NADH-ubiquinone oxidoreductase chain 4 (ND4).